The primary structure comprises 202 residues: Casparian strip membrane protein 1 (202 aa).

Topologically, residues M1 to S42 are cytoplasmic. Residues I43 to M63 form a helical membrane-spanning segment. Residues G64 to T90 lie on the Extracellular side of the membrane. Residues F91 to I111 traverse the membrane as a helical segment. Residues V112–D130 are Cytoplasmic-facing. The chain crosses the membrane as a helical span at residues T131–A151. Topologically, residues H152 to R173 are extracellular. Residues V174–L194 form a helical membrane-spanning segment. Residues S195 to N202 lie on the Cytoplasmic side of the membrane.

Belongs to the Casparian strip membrane proteins (CASP) family. In terms of assembly, homodimer and heterodimers.

It is found in the cell membrane. Functionally, regulates membrane-cell wall junctions and localized cell wall deposition. Required for establishment of the Casparian strip membrane domain (CSD) and the subsequent formation of Casparian strips, a cell wall modification of the root endodermis that determines an apoplastic barrier between the intraorganismal apoplasm and the extraorganismal apoplasm and prevents lateral diffusion. The polypeptide is Casparian strip membrane protein 1 (Striga hermonthica (Purple witchweed)).